Here is a 142-residue protein sequence, read N- to C-terminus: 3-hydroxyacyl-[acyl-carrier-protein] dehydratase FabZ (142 aa).

The active site involves His48.

It belongs to the thioester dehydratase family. FabZ subfamily.

It is found in the cytoplasm. It carries out the reaction a (3R)-hydroxyacyl-[ACP] = a (2E)-enoyl-[ACP] + H2O. Involved in unsaturated fatty acids biosynthesis. Catalyzes the dehydration of short chain beta-hydroxyacyl-ACPs and long chain saturated and unsaturated beta-hydroxyacyl-ACPs. The protein is 3-hydroxyacyl-[acyl-carrier-protein] dehydratase FabZ of Prochlorococcus marinus (strain MIT 9313).